The sequence spans 103 residues: Protein Rev (103 aa).

At Ser5 the chain carries Phosphoserine; by host CK2. The homomultimerization stretch occupies residues 17 to 25 (IIKILYQSN). 2 disordered regions span residues 24–49 (SNPCPTPAGSRNARKNRRRRWRRRQA) and 82–103 (IRDPEADRLPGTGTVDPGTKDN). The Nuclear localization signal and RNA-binding (RRE) motif lies at 33–49 (SRNARKNRRRRWRRRQA). Residues 35–48 (NARKNRRRRWRRRQ) are compositionally biased toward basic residues. Residues 72 to 83 (VDLPPLEQLNIR) carry the Nuclear export signal and binding to XPO1 motif.

The protein belongs to the HIV-1 REV protein family. Homomultimer; when bound to the RRE. Multimeric assembly is essential for activity and may involve XPO1. Binds to human KPNB1, XPO1, TNPO1, RANBP5 and IPO7. Interacts with the viral Integrase. Interacts with human KHDRBS1. Interacts with human NAP1; this interaction decreases Rev multimerization and stimulates its activity. Interacts with human DEAD-box helicases DDX3 and DDX24; these interactions may serve for viral RNA export to the cytoplasm and packaging, respectively. Interacts with human PSIP1; this interaction may inhibit HIV-1 DNA integration by promoting dissociation of the Integrase-LEDGF/p75 complex. Post-translationally, asymmetrically arginine dimethylated at one site by host PRMT6. Methylation impairs the RNA-binding activity and export of viral RNA from the nucleus to the cytoplasm. In terms of processing, phosphorylated by protein kinase CK2. Presence of, and maybe binding to the N-terminus of the regulatory beta subunit of CK2 is necessary for CK2-mediated Rev's phosphorylation.

It is found in the host nucleus. It localises to the host nucleolus. The protein localises to the host cytoplasm. Its function is as follows. Escorts unspliced or incompletely spliced viral pre-mRNAs (late transcripts) out of the nucleus of infected cells. These pre-mRNAs carry a recognition sequence called Rev responsive element (RRE) located in the env gene, that is not present in fully spliced viral mRNAs (early transcripts). This function is essential since most viral proteins are translated from unspliced or partially spliced pre-mRNAs which cannot exit the nucleus by the pathway used by fully processed cellular mRNAs. Rev itself is translated from a fully spliced mRNA that readily exits the nucleus. Rev's nuclear localization signal (NLS) binds directly to KPNB1/Importin beta-1 without previous binding to KPNA1/Importin alpha-1. KPNB1 binds to the GDP bound form of RAN (Ran-GDP) and targets Rev to the nucleus. In the nucleus, the conversion from Ran-GDP to Ran-GTP dissociates Rev from KPNB1 and allows Rev's binding to the RRE in viral pre-mRNAs. Rev multimerization on the RRE via cooperative assembly exposes its nuclear export signal (NES) to the surface. Rev can then form a complex with XPO1/CRM1 and Ran-GTP, leading to nuclear export of the complex. Conversion from Ran-GTP to Ran-GDP mediates dissociation of the Rev/RRE/XPO1/RAN complex, so that Rev can return to the nucleus for a subsequent round of export. Beside KPNB1, also seems to interact with TNPO1/Transportin-1, RANBP5/IPO5 and IPO7/RANBP7 for nuclear import. The nucleoporin-like HRB/RIP is an essential cofactor that probably indirectly interacts with Rev to release HIV RNAs from the perinuclear region to the cytoplasm. This is Protein Rev from Human immunodeficiency virus type 1 group O (isolate MVP5180) (HIV-1).